The primary structure comprises 602 residues: Na(+)/dicarboxylate cotransporter 3 (602 aa).

The Cytoplasmic segment spans residues 1–16 (MAALAAAAKKVWSARR). The helical transmembrane segment at 17 to 37 (LLVLLFTPLALLPVVFALPPK) threads the bilayer. The Extracellular segment spans residues 38–55 (EGRCLFVILLMAVYWCTE). A helical transmembrane segment spans residues 56-76 (ALPLSVTALLPIVLFPFMGIL). Over 77 to 82 (PSNKVC) the chain is Cytoplasmic. The chain crosses the membrane as a helical span at residues 83–103 (PQYFLDTNFLFLSGLIMASAI). The Extracellular portion of the chain corresponds to 104-137 (EEWNLHRRIALKILMLVGVQPARLILGMMVTTSF). The chain crosses the membrane as a helical span at residues 138 to 158 (LSMWLSNTASTAMMLPIANAI). Over 159-229 (LKSLFGQKEV…SRKEDEYRRN (71 aa)) the chain is Cytoplasmic. A helical transmembrane segment spans residues 230–250 (IWKGFLISIPYSASIGGTATL). Over 251–278 (TGTAPNLILLGQLKSFFPQCDVVNFGSW) the chain is Extracellular. The helical transmembrane segment at 279–299 (FIFAFPLMLLFLLAGWLWISF) threads the bilayer. At 300 to 336 (LYGGLSFRGWRKNKSEIRTNAEDRARAVIREEYQNLG) the chain is on the cytoplasmic side. A helical transmembrane segment spans residues 337 to 357 (PIKFAEQAVFILFCMFAILLF). At 358–372 (TRDPKFIPGWASLFN) the chain is on the extracellular side. Residues 373 to 393 (PGFLSDAVTGVAIVTILFFFP) form a helical membrane-spanning segment. The Cytoplasmic portion of the chain corresponds to 394 to 422 (SQRPSLKWWFDFKAPNTETEPLLTWKKAQ). The helical intramembrane region spans 423–443 (ETVPWNIILLLGGGFAMAKGC). Topologically, residues 444 to 461 (EESGLSVWIGGQLHPLEN) are cytoplasmic. The helical transmembrane segment at 462–482 (VPPALAVLLITVVIAFFTEFA) threads the bilayer. Residues 483 to 505 (SNTATIIIFLPVLAELAIRLRVH) are Extracellular-facing. A helical membrane pass occupies residues 506–526 (PLYLMIPGTVGCSFAFMLPVS). Residues 527-546 (TPPNSIAFASGHLLVKDMVR) are Cytoplasmic-facing. Residues 547 to 567 (TGLLMNLMGVLLLSLAMNTWA) form a helical membrane-spanning segment. The Extracellular segment spans residues 568-602 (QTIFQLGTFPDWADMYSVNVTALPPTLANDTFRTL). 2 N-linked (GlcNAc...) asparagine glycosylation sites follow: asparagine 586 and asparagine 596.

It belongs to the SLC13A/DASS transporter (TC 2.A.47) family. NADC subfamily. Expression is highest in kidney. Detected in placenta, brain, liver and pancreas.

Its subcellular location is the cell membrane. The enzyme catalyses succinate(out) + 3 Na(+)(out) = succinate(in) + 3 Na(+)(in). It carries out the reaction 2-oxoglutarate(out) + 3 Na(+)(out) = 2-oxoglutarate(in) + 3 Na(+)(in). The catalysed reaction is N-acetyl-L-aspartate(out) + 3 Na(+)(out) = N-acetyl-L-aspartate(in) + 3 Na(+)(in). It catalyses the reaction glutarate(out) + 3 Na(+)(out) = glutarate(in) + 3 Na(+)(in). The enzyme catalyses fumarate(out) + 3 Na(+)(out) = fumarate(in) + 3 Na(+)(in). It carries out the reaction malate(out) + 3 Na(+)(out) = malate(in) + 3 Na(+)(in). The catalysed reaction is 2,2-dimethylsuccinate(out) + 3 Na(+)(out) = 2,2-dimethylsuccinate(in) + 3 Na(+)(in). It catalyses the reaction 2,3-dimethylsuccinate(out) + 3 Na(+)(out) = 2,3-dimethylsuccinate(in) + 3 Na(+)(in). The enzyme catalyses itaconate(out) + 3 Na(+)(out) = itaconate(in) + 3 Na(+)(in). Li(+) decreases succinate transport in the presence of Na(+). Functionally, high-affinity sodium-dicarboxylate cotransporter that accepts a range of substrates with 4-6 carbon atoms, such as the citric acid cycle intermediates succinate and alpha-ketoglutarate (2-oxoglutarate), as well as other compounds including N-acetyl-L-aspartate. Transports the dicarboxylate into the cell with a probable stoichiometry of 3 Na(+) for 1 divalent dicarboxylate, rendering the process electrogenic. Can transport citrate in a Na(+)-dependent manner, recognizing the divalent form of citrate rather than the trivalent form which is normally found in blood. Imports itaconate in hepatocytes leading to activation of TFEB-dependent lysosomal biogenesis involved in antibacterial innate immune response. The protein is Na(+)/dicarboxylate cotransporter 3 (SLC13A3) of Homo sapiens (Human).